Reading from the N-terminus, the 668-residue chain is DNA mismatch repair protein MutL (668 aa).

This sequence belongs to the DNA mismatch repair MutL/HexB family.

Functionally, this protein is involved in the repair of mismatches in DNA. It is required for dam-dependent methyl-directed DNA mismatch repair. May act as a 'molecular matchmaker', a protein that promotes the formation of a stable complex between two or more DNA-binding proteins in an ATP-dependent manner without itself being part of a final effector complex. The protein is DNA mismatch repair protein MutL of Limosilactobacillus reuteri (strain DSM 20016) (Lactobacillus reuteri).